The following is a 330-amino-acid chain: Elongation factor Ts (330 aa).

The involved in Mg(2+) ion dislocation from EF-Tu stretch occupies residues 79 to 82 (TDFV).

It belongs to the EF-Ts family.

The protein resides in the cytoplasm. Its function is as follows. Associates with the EF-Tu.GDP complex and induces the exchange of GDP to GTP. It remains bound to the aminoacyl-tRNA.EF-Tu.GTP complex up to the GTP hydrolysis stage on the ribosome. In Bacteroides thetaiotaomicron (strain ATCC 29148 / DSM 2079 / JCM 5827 / CCUG 10774 / NCTC 10582 / VPI-5482 / E50), this protein is Elongation factor Ts.